A 159-amino-acid chain; its full sequence is MQVIAVYPGTFDPITNGHTDIVRRATRLFDRVVVAVAASPAKQPFFNLDERVGLARDALSGLGNVEVTGFSGLLAKFMREQQAQVILRGLRAVSDFEHEFQLAGMNRHLAPELETLFLTPAEEFAYVSSSLVREIAALGGDVSHFVSGPVVAALKARMG.

Residue threonine 10 coordinates substrate. ATP contacts are provided by residues 10–11 and histidine 18; that span reads TF. Lysine 42, leucine 74, and arginine 88 together coordinate substrate. ATP contacts are provided by residues 89 to 91, glutamate 99, and 124 to 130; these read GLR and FAYVSSS.

It belongs to the bacterial CoaD family. As to quaternary structure, homohexamer. Mg(2+) is required as a cofactor.

It localises to the cytoplasm. It carries out the reaction (R)-4'-phosphopantetheine + ATP + H(+) = 3'-dephospho-CoA + diphosphate. The protein operates within cofactor biosynthesis; coenzyme A biosynthesis; CoA from (R)-pantothenate: step 4/5. Its function is as follows. Reversibly transfers an adenylyl group from ATP to 4'-phosphopantetheine, yielding dephospho-CoA (dPCoA) and pyrophosphate. This is Phosphopantetheine adenylyltransferase from Thioalkalivibrio sulfidiphilus (strain HL-EbGR7).